Reading from the N-terminus, the 360-residue chain is Aminomethyltransferase (360 aa).

This sequence belongs to the GcvT family. The glycine cleavage system is composed of four proteins: P, T, L and H.

It catalyses the reaction N(6)-[(R)-S(8)-aminomethyldihydrolipoyl]-L-lysyl-[protein] + (6S)-5,6,7,8-tetrahydrofolate = N(6)-[(R)-dihydrolipoyl]-L-lysyl-[protein] + (6R)-5,10-methylene-5,6,7,8-tetrahydrofolate + NH4(+). Its function is as follows. The glycine cleavage system catalyzes the degradation of glycine. This chain is Aminomethyltransferase, found in Legionella pneumophila subsp. pneumophila (strain Philadelphia 1 / ATCC 33152 / DSM 7513).